The sequence spans 711 residues: Pentatricopeptide repeat-containing protein At5g46580, chloroplastic (711 aa).

The transit peptide at 1-43 directs the protein to the chloroplast; sequence MATVLTTAIDVCFNPQNSDTKKHSLFLKPSLFRQSRSRKLNIS. PPR repeat units lie at residues 185–219, 220–254, 255–289, 290–324, 325–359, 360–394, 395–425, 431–465, 466–500, and 501–535; these read ETIFYNVTMKSLRFGRQFQLIEEMALEMVKDGVEL, DNITYSTIITCAKRCNLYNKAIEWFERMYKTGLMP, DEVTYSAILDVYSKSGKVEEVLSLYERAVATGWKP, DAIAFSVLGKMFGEAGDYDGIRYVLQEMKSMDVKP, NVVVYNTLLEAMGRAGKPGLARSLFNEMLEAGLTP, NEKTLTALVKIYGKARWARDALQLWEEMKAKKWPM, DFILYNTLLNMCADIGLEEEAERLFNDMKES, DNFSYTAMLNIYGSGGKAEKAMELFEEMLKAGVQV, NVMGCTCLVQCLGKAKRIDDVVYVFDLSIKRGVKP, and DDRLCGCLLSVMALCESSEDAEKVMACLERANKKL. In terms of domain architecture, Smr spans 614-696; that stretch reads LDVRSLSVGA…IFVATKEDLV (83 aa).

The protein belongs to the PPR family. P subfamily.

It localises to the plastid. The protein resides in the chloroplast. The polypeptide is Pentatricopeptide repeat-containing protein At5g46580, chloroplastic (Arabidopsis thaliana (Mouse-ear cress)).